The chain runs to 467 residues: ATP synthase subunit beta (467 aa).

ATP is bound at residue 150–157 (GGAGVGKT).

Belongs to the ATPase alpha/beta chains family. In terms of assembly, F-type ATPases have 2 components, CF(1) - the catalytic core - and CF(0) - the membrane proton channel. CF(1) has five subunits: alpha(3), beta(3), gamma(1), delta(1), epsilon(1). CF(0) has three main subunits: a(1), b(2) and c(9-12). The alpha and beta chains form an alternating ring which encloses part of the gamma chain. CF(1) is attached to CF(0) by a central stalk formed by the gamma and epsilon chains, while a peripheral stalk is formed by the delta and b chains.

Its subcellular location is the cell inner membrane. It carries out the reaction ATP + H2O + 4 H(+)(in) = ADP + phosphate + 5 H(+)(out). Functionally, produces ATP from ADP in the presence of a proton gradient across the membrane. The catalytic sites are hosted primarily by the beta subunits. The protein is ATP synthase subunit beta of Vibrio vulnificus (strain YJ016).